Consider the following 674-residue polypeptide: Putative kinase-like protein TMKL1 (674 aa).

A signal peptide spans 1-25 (MGMEALRFLHVIFFFVLILHCHCGT). Residues 26 to 295 (SLSGSSDVKL…PLKPCLGSSR (270 aa)) are Extracellular-facing. Asparagine 57, asparagine 90, asparagine 95, and asparagine 110 each carry an N-linked (GlcNAc...) asparagine glycan. 4 LRR repeats span residues 100–122 (HLLSLQLPSANLTGSLPREIGEF), 124–146 (MLQSVFLNINSLSGSIPLELGYT), 148–169 (SLSDVDLSGNALAGVLPPSIWN), and 173–194 (KLVSFKIHGNNLSGVLPEPALP). 2 N-linked (GlcNAc...) asparagine glycosylation sites follow: asparagine 183 and asparagine 195. LRR repeat units follow at residues 200–222 (NLQVLDLGGNKFSGEFPEFITRF), 224–244 (GVKSLDLSSNVFEGLVPEGLG), and 247–269 (ELESLNLSHNNFSGMLPDFGESK). Residues asparagine 252 and asparagine 257 are each glycosylated (N-linked (GlcNAc...) asparagine). A helical transmembrane segment spans residues 296–323 (LSPGAVAGLVIGLMSGAVVVASLLIGYL). Over 324-674 (QNKKRKSSIE…ETRSDAETPF (351 aa)) the chain is Cytoplasmic. The disordered stretch occupies residues 331 to 350 (SIESEDDLEEGDEEDEIGEK). The segment covering 333–348 (ESEDDLEEGDEEDEIG) has biased composition (acidic residues). Serine 334 carries the phosphoserine modification. Residues 373–674 (NATGQVMEKT…ETRSDAETPF (302 aa)) enclose the Protein kinase domain. Threonine 375 carries the phosphothreonine modification. Serine 454 bears the Phosphoserine mark. Residues 649–674 (LEENRPRNRSALYSPTETRSDAETPF) form a disordered region.

This sequence belongs to the protein kinase superfamily.

Its subcellular location is the membrane. Its function is as follows. Does not seem to have conserved a kinase activity. This chain is Putative kinase-like protein TMKL1 (TMKL1), found in Arabidopsis thaliana (Mouse-ear cress).